We begin with the raw amino-acid sequence, 1434 residues long: Probable ATP-dependent RNA helicase spindle-E (1434 aa).

The interval 66-86 (VGGPSNTKRTKTLDELESDDD) is disordered. In terms of domain architecture, Helicase ATP-binding spans 127–294 (MKAIKENPVV…FASCKSMPPV (168 aa)). 140 to 147 (GETGCGKT) provides a ligand contact to ATP. The DEAH box motif lies at 240–243 (DEVH). In terms of domain architecture, Helicase C-terminal spans 354 to 526 (QSEQSYEEAK…SSVLKAKELD (173 aa)). The 64-residue stretch at 938-1001 (ASAITKGLQL…RLMRHELRRD (64 aa)) folds into the Tudor domain.

It belongs to the DEAD box helicase family. DEAH subfamily.

The protein localises to the cytoplasm. It catalyses the reaction ATP + H2O = ADP + phosphate + H(+). Its function is as follows. Probable ATP-binding RNA helicase which plays a central role during spermatogenesis and oogenesis by repressing transposable elements and preventing their mobilization, which is essential for the germline integrity. Acts via the piRNA metabolic process, which mediates the repression of transposable elements during meiosis by forming complexes composed of piRNAs and Piwi and govern the methylation and subsequent repression of transposons. Involved in the repression of LTR retrotransposon copia. Also involved in telomere regulation by repressing specialized telomeric retroelements HeT-A, TAHRE, and TART; Drosophila telomeres being maintained by transposition of specialized telomeric retroelements. Involved in telomeric trans-silencing, a repression mechanism by which a transposon or a transgene inserted in subtelomeric heterochromatin has the capacity to repress in trans in the female germline, a homologous transposon, or transgene located in euchromatin. Involved in the repression of testis-expressed Stellate genes by the homologous Su(Ste) repeats. Required for anteroposterior and dorsoventral axis formation during oogenesis. The chain is Probable ATP-dependent RNA helicase spindle-E (spn-E) from Drosophila grimshawi (Hawaiian fruit fly).